We begin with the raw amino-acid sequence, 469 residues long: Tetratricopeptide repeat protein 38 (469 aa).

TPR repeat units lie at residues 107 to 140, 179 to 212, and 251 to 284; these read REKL…HPTD, SYVK…ERTD, and CHVY…QCFA.

This sequence belongs to the TTC38 family.

In Xenopus laevis (African clawed frog), this protein is Tetratricopeptide repeat protein 38 (ttc38).